The primary structure comprises 226 residues: Leucyl/phenylalanyl-tRNA--protein transferase (226 aa).

It belongs to the L/F-transferase family.

It is found in the cytoplasm. It carries out the reaction N-terminal L-lysyl-[protein] + L-leucyl-tRNA(Leu) = N-terminal L-leucyl-L-lysyl-[protein] + tRNA(Leu) + H(+). It catalyses the reaction N-terminal L-arginyl-[protein] + L-leucyl-tRNA(Leu) = N-terminal L-leucyl-L-arginyl-[protein] + tRNA(Leu) + H(+). The catalysed reaction is L-phenylalanyl-tRNA(Phe) + an N-terminal L-alpha-aminoacyl-[protein] = an N-terminal L-phenylalanyl-L-alpha-aminoacyl-[protein] + tRNA(Phe). Its function is as follows. Functions in the N-end rule pathway of protein degradation where it conjugates Leu, Phe and, less efficiently, Met from aminoacyl-tRNAs to the N-termini of proteins containing an N-terminal arginine or lysine. The polypeptide is Leucyl/phenylalanyl-tRNA--protein transferase (Pseudomonas fluorescens (strain SBW25)).